We begin with the raw amino-acid sequence, 590 residues long: Putative histone-lysine N-methyltransferase PRDM6 (590 aa).

The tract at residues 25-87 (QLFPHGGGGP…STPASSSTSA (63 aa)) is disordered. The segment covering 29 to 42 (HGGGGPLKGGGAAG) has biased composition (gly residues). Residues 71–87 (ASLSSASSTPASSSTSA) are compositionally biased toward low complexity. In terms of domain architecture, SET spans 241-360 (REVCLCTSTV…RGTELLVWYN (120 aa)). Residues 468 to 490 (WKCGQCFKTFTQRILLQMHVCTQ) form a C2H2-type 1; degenerate zinc finger. C2H2-type zinc fingers lie at residues 496–518 (YQCGHCSQSFSQPSELRNHVVTH) and 524–546 (FKCGYCGRAFAGATTLNNHIRTH). A C2H2-type 4; degenerate zinc finger spans residues 552–574 (FKCERCERSFTQATQLSRHQRMP).

This sequence belongs to the class V-like SAM-binding methyltransferase superfamily. In terms of assembly, interacts with HDAC1, HDAC2, HDAC3, CBX1 and EP300.

Its subcellular location is the nucleus. It carries out the reaction L-lysyl(20)-[histone H4] + S-adenosyl-L-methionine = N(6)-methyl-L-lysyl(20)-[histone H4] + S-adenosyl-L-homocysteine + H(+). Its function is as follows. Putative histone methyltransferase that acts as a transcriptional repressor of smooth muscle gene expression. Promotes the transition from differentiated to proliferative smooth muscle by suppressing differentiation and maintaining the proliferative potential of vascular smooth muscle cells. Also plays a role in endothelial cells by inhibiting endothelial cell proliferation, survival and differentiation. It is unclear whether it has histone methyltransferase activity in vivo. According to some authors, it does not act as a histone methyltransferase by itself and represses transcription by recruiting EHMT2/G9a. According to others, it possesses histone methyltransferase activity when associated with other proteins and specifically methylates 'Lys-20' of histone H4 in vitro. 'Lys-20' methylation represents a specific tag for epigenetic transcriptional repression. The sequence is that of Putative histone-lysine N-methyltransferase PRDM6 (PRDM6) from Bos taurus (Bovine).